The sequence spans 974 residues: Coiled-coil domain-containing protein 146 (974 aa).

A disordered region spans residues 1-44; the sequence is MEDRSKYIAEESEDEEDEEQEEKEKKGGASTSTETEEDQEDIPS. Positions 10 to 21 are enriched in acidic residues; it reads EESEDEEDEEQE. Position 12 is a phosphoserine (Ser12). Coiled coils occupy residues 105–160, 195–340, 421–474, 512–660, 687–712, and 767–848; these read VQLL…QERE, KLLK…TKEN, LPEQ…REVL, KKLE…NESG, QDIE…QRQI, and LTEE…ELSM.

Interacts with CCDC38 and CCDC42. Interacts with intraflagellar transport proteins IFT20 and IFT88.

The protein resides in the cytoplasm. It localises to the cytoskeleton. It is found in the microtubule organizing center. The protein localises to the centrosome. Its subcellular location is the centriole. The protein resides in the cell projection. It localises to the cilium. It is found in the flagellum. The protein localises to the flagellum axoneme. Its subcellular location is the cilium basal body. The protein resides in the midbody. In terms of biological role, essential for sperm flagellum biogenesis and male fertility. The sequence is that of Coiled-coil domain-containing protein 146 (Ccdc146) from Rattus norvegicus (Rat).